A 217-amino-acid chain; its full sequence is MRLILLGGPGAGKGTQANYIKEKYGIPQISTGDMLRAQIKAGTELGMKAKAIMDAGGLVSDDIIIGMVKARLQEADCKNGYLFDGFPRTIPQAEAMKAAGVPIDYVVEIDVADEEIIKRMSGRRVHVASGRTYHVVFNPPKVAGKDDVTGEDLIQRDDDQEETVKKRLDVYHAQTEPLVKYYGDWAARGEAGAPKYVKISGVGKVEQIRDSIFAALG.

10 to 15 (GAGKGT) is an ATP binding site. The tract at residues 30–59 (STGDMLRAQIKAGTELGMKAKAIMDAGGLV) is NMP. AMP is bound by residues Thr31, Arg36, 57 to 59 (GLV), 85 to 88 (GFPR), and Gln92. The interval 122–159 (GRRVHVASGRTYHVVFNPPKVAGKDDVTGEDLIQRDDD) is LID. ATP contacts are provided by residues Arg123 and 132–133 (TY). Arg156 and Arg167 together coordinate AMP. Residue Gly203 coordinates ATP.

The protein belongs to the adenylate kinase family. Monomer.

It is found in the cytoplasm. The enzyme catalyses AMP + ATP = 2 ADP. It participates in purine metabolism; AMP biosynthesis via salvage pathway; AMP from ADP: step 1/1. Its function is as follows. Catalyzes the reversible transfer of the terminal phosphate group between ATP and AMP. Plays an important role in cellular energy homeostasis and in adenine nucleotide metabolism. The sequence is that of Adenylate kinase from Thiobacillus denitrificans (strain ATCC 25259 / T1).